The primary structure comprises 32 residues: Variegin (32 aa).

The tract at residues 1–32 (SDQGDVAEPKMHKTAPPFDFEAIPEEYLDDES) is disordered. A contains the active site region spans residues 8 to 14 (EPKMHKT). Threonine 14 is a glycosylation site (O-linked (Hex) threonine). Over residues 22–32 (AIPEEYLDDES) the composition is skewed to acidic residues.

Interacts with human F2 (thrombin); the interaction results in thrombin inhibition.

Its subcellular location is the secreted. Its function is as follows. Thrombin inhibitor. Does not inhibit other serine proteases. In Amblyomma variegatum (Tropical bont tick), this protein is Variegin.